A 166-amino-acid polypeptide reads, in one-letter code: NAD(P)H-quinone oxidoreductase subunit I, chloroplastic (166 aa).

4Fe-4S ferredoxin-type domains lie at 55–84 and 95–124; these read GRIH…VDWK and LNYS…MTEE. The [4Fe-4S] cluster site is built by Cys-64, Cys-67, Cys-70, Cys-74, Cys-104, Cys-107, Cys-110, and Cys-114.

This sequence belongs to the complex I 23 kDa subunit family. As to quaternary structure, NDH is composed of at least 16 different subunits, 5 of which are encoded in the nucleus. The cofactor is [4Fe-4S] cluster.

The protein localises to the plastid. It is found in the chloroplast thylakoid membrane. It catalyses the reaction a plastoquinone + NADH + (n+1) H(+)(in) = a plastoquinol + NAD(+) + n H(+)(out). The catalysed reaction is a plastoquinone + NADPH + (n+1) H(+)(in) = a plastoquinol + NADP(+) + n H(+)(out). Its function is as follows. NDH shuttles electrons from NAD(P)H:plastoquinone, via FMN and iron-sulfur (Fe-S) centers, to quinones in the photosynthetic chain and possibly in a chloroplast respiratory chain. The immediate electron acceptor for the enzyme in this species is believed to be plastoquinone. Couples the redox reaction to proton translocation, and thus conserves the redox energy in a proton gradient. In Rensonia salvadorica, this protein is NAD(P)H-quinone oxidoreductase subunit I, chloroplastic.